The following is a 193-amino-acid chain: Peptidyl-tRNA hydrolase (193 aa).

Tyr17 is a binding site for tRNA. Residue His22 is the Proton acceptor of the active site. Positions 68, 70, and 115 each coordinate tRNA.

This sequence belongs to the PTH family. In terms of assembly, monomer.

The protein resides in the cytoplasm. It catalyses the reaction an N-acyl-L-alpha-aminoacyl-tRNA + H2O = an N-acyl-L-amino acid + a tRNA + H(+). Functionally, hydrolyzes ribosome-free peptidyl-tRNAs (with 1 or more amino acids incorporated), which drop off the ribosome during protein synthesis, or as a result of ribosome stalling. In terms of biological role, catalyzes the release of premature peptidyl moieties from peptidyl-tRNA molecules trapped in stalled 50S ribosomal subunits, and thus maintains levels of free tRNAs and 50S ribosomes. This Alteromonas mediterranea (strain DSM 17117 / CIP 110805 / LMG 28347 / Deep ecotype) protein is Peptidyl-tRNA hydrolase.